A 149-amino-acid chain; its full sequence is Large ribosomal subunit protein bL9 (149 aa).

Belongs to the bacterial ribosomal protein bL9 family.

Functionally, binds to the 23S rRNA. This chain is Large ribosomal subunit protein bL9, found in Ligilactobacillus salivarius (strain UCC118) (Lactobacillus salivarius).